The sequence spans 198 residues: Heme oxygenase PigA (198 aa).

Residue His26 participates in heme b binding.

It belongs to the heme oxygenase family.

It catalyses the reaction heme b + 3 AH2 + 3 O2 + 2 H(+) = biliverdin IXbeta + CO + Fe(2+) + 3 A + 3 H2O. The enzyme catalyses heme b + 3 AH2 + 3 O2 + 3 H(+) = biliverdin IXdelta + CO + Fe(2+) + 3 A + 3 H2O. Functionally, involved in heme degradation. Catalyzes the degradation of heme to biliverdin, with the release of iron. Forms biliverdin delta (70%) and beta (30%). Under anaerobic conditions ferredoxin--NADP(+) reductase (fpr) can provide the necessary electrons; Bfd is not required. This Pseudomonas aeruginosa (strain ATCC 15692 / DSM 22644 / CIP 104116 / JCM 14847 / LMG 12228 / 1C / PRS 101 / PAO1) protein is Heme oxygenase PigA.